A 60-amino-acid polypeptide reads, in one-letter code: Cecropin-B type 2 (60 aa).

The first 24 residues, 1–24 (MNFSKLFALVLLIGLVLLTGQTEA), serve as a signal peptide directing secretion. Ile-58 is subject to Isoleucine amide.

The protein belongs to the cecropin family.

It localises to the secreted. Cecropins have lytic and antibacterial activity against several Gram-positive and Gram-negative bacteria. This Aedes albopictus (Asian tiger mosquito) protein is Cecropin-B type 2 (CECB2).